A 167-amino-acid chain; its full sequence is SAR-endolysin (167 aa).

The helical; Signal-anchor for type II membrane protein transmembrane segment at 10–32 threads the bilayer; that stretch reads SVMAAISGGAIAIASVLITGPGG. Residues glutamate 37 and aspartate 46 each act as proton donor/acceptor in the active site.

The protein belongs to the glycosyl hydrolase 24 family.

The protein resides in the host cell inner membrane. The enzyme catalyses Hydrolysis of (1-&gt;4)-beta-linkages between N-acetylmuramic acid and N-acetyl-D-glucosamine residues in a peptidoglycan and between N-acetyl-D-glucosamine residues in chitodextrins.. Its function is as follows. Signal-arrest-release (SAR) endolysin with lysozyme activity that degrades host peptidoglycans and participates with the pinholin and spanin proteins in the sequential events which lead to programmed host cell lysis releasing the mature viral particles. Once the pinholin has permeabilized the host cell membrane, the SAR-endolysin is released into the periplasm where it breaks down the peptidoglycan layer. The polypeptide is SAR-endolysin (19) (Bacteriophage PS119).